The chain runs to 793 residues: E3 ubiquitin-protein ligase UHRF1 (793 aa).

The 78-residue stretch at Met1–Val78 folds into the Ubiquitin-like domain. A phosphoserine mark is found at Ser76, Ser91, Ser95, and Ser165. The segment at Ser82–Glu124 is disordered. 2 tudor-like regions span residues Gly133–Arg209 and Asp216–Pro283. Lys279 is covalently cross-linked (Glycyl lysine isopeptide (Lys-Gly) (interchain with G-Cter in SUMO2)). The residue at position 287 (Ser287) is a Phosphoserine. The linker stretch occupies residues Arg296–Ser301. Ser298 carries the post-translational modification Phosphoserine; by PKA. The PHD-type zinc-finger motif lies at Asn310–Asp366. Histone H3R2me0 binding regions lie at residues Cys333–Asp337 and Pro353–Glu355. Phosphoserine is present on Ser368. Lys385 is covalently cross-linked (Glycyl lysine isopeptide (Lys-Gly) (interchain with G-Cter in SUMO2)). Position 399 is an N6-acetyllysine (Lys399). The YDG domain occupies Gly419 to Arg582. Positions His445–Val446 are required to promote base flipping. DNA contacts are provided by residues Ala463–Gly464 and Asp469. Required for formation of a 5-methylcytosine-binding pocket stretches follow at residues Tyr466–Asp469 and Tyr478–Ser481. An N6-acetyllysine; alternate modification is found at Lys546. Lys546 participates in a covalent cross-link: Glycyl lysine isopeptide (Lys-Gly) (interchain with G-Cter in SUMO2); alternate. Positions Arg618 to Glu629 are enriched in basic and acidic residues. Residues Arg618 to Pro673 form a disordered region. Residue Ser639 is modified to Phosphoserine; by CDK1. Position 651 is a phosphoserine (Ser651). Lys670 is covalently cross-linked (Glycyl lysine isopeptide (Lys-Gly) (interchain with G-Cter in SUMO2)). A phosphoserine mark is found at Ser707 and Ser709. The segment at Cys724 to Arg763 adopts an RING-type zinc-finger fold.

In terms of assembly, interacts with DNMT3A and DNMT3B. Interacts with DNMT1; the interaction is direct. Interacts with USP7; leading to its deubiquitination. Interacts with histone H3. Interacts with HDAC1, but not with HDAC2. Interacts with BLTP3A. Interacts with PML. Interacts with EHMT2. Binds hemimethylated CpG containing oligonucleotides. Interacts with ZNF263; recruited to the SIX3 promoter along with other proteins involved in chromatin modification and transcriptional corepression where it contributes to transcriptional repression. Interacts with UHRF2. Interacts with FANCD2. Interacts with TET1 isoform 2; this interaction induces the recruitment of TET1 isoform 2 to replicating heterochromatin. In terms of processing, phosphorylation at Ser-298 of the linker region decreases the binding to H3K9me3. Phosphorylation at Ser-639 by CDK1 during M phase impairs interaction with USP7, preventing deubiquitination and leading to degradation by the proteasome. Post-translationally, ubiquitinated; which leads to proteasomal degradation. Autoubiquitinated; interaction with USP7 leads to deubiquitination and prevents degradation. Ubiquitination and degradation takes place during M phase, when phosphorylation at Ser-639 prevents interaction with USP7 and subsequent deubiquitination. Polyubiquitination may be stimulated by DNA damage. In terms of tissue distribution, expressed in thymus, bone marrow, testis, lung and heart. Overexpressed in breast cancer.

Its subcellular location is the nucleus. The catalysed reaction is S-ubiquitinyl-[E2 ubiquitin-conjugating enzyme]-L-cysteine + [acceptor protein]-L-lysine = [E2 ubiquitin-conjugating enzyme]-L-cysteine + N(6)-ubiquitinyl-[acceptor protein]-L-lysine.. The protein operates within protein modification; protein ubiquitination. Its function is as follows. Multidomain protein that acts as a key epigenetic regulator by bridging DNA methylation and chromatin modification. Specifically recognizes and binds hemimethylated DNA at replication forks via its YDG domain and recruits DNMT1 methyltransferase to ensure faithful propagation of the DNA methylation patterns through DNA replication. In addition to its role in maintenance of DNA methylation, also plays a key role in chromatin modification: through its tudor-like regions and PHD-type zinc fingers, specifically recognizes and binds histone H3 trimethylated at 'Lys-9' (H3K9me3) and unmethylated at 'Arg-2' (H3R2me0), respectively, and recruits chromatin proteins. Enriched in pericentric heterochromatin where it recruits different chromatin modifiers required for this chromatin replication. Also localizes to euchromatic regions where it negatively regulates transcription possibly by impacting DNA methylation and histone modifications. Has E3 ubiquitin-protein ligase activity by mediating the ubiquitination of target proteins such as histone H3 and PML. It is still unclear how E3 ubiquitin-protein ligase activity is related to its role in chromatin in vivo. Plays a role in DNA repair by cooperating with UHRF2 to ensure recruitment of FANCD2 to interstrand cross-links (ICLs) leading to FANCD2 activation. Acts as a critical player of proper spindle architecture by catalyzing the 'Lys-63'-linked ubiquitination of KIF11, thereby controlling KIF11 localization on the spindle. The chain is E3 ubiquitin-protein ligase UHRF1 (UHRF1) from Homo sapiens (Human).